A 345-amino-acid chain; its full sequence is Phosphoribosylformylglycinamidine cyclo-ligase (345 aa).

It belongs to the AIR synthase family.

It localises to the cytoplasm. The catalysed reaction is 2-formamido-N(1)-(5-O-phospho-beta-D-ribosyl)acetamidine + ATP = 5-amino-1-(5-phospho-beta-D-ribosyl)imidazole + ADP + phosphate + H(+). The protein operates within purine metabolism; IMP biosynthesis via de novo pathway; 5-amino-1-(5-phospho-D-ribosyl)imidazole from N(2)-formyl-N(1)-(5-phospho-D-ribosyl)glycinamide: step 2/2. This Mannheimia succiniciproducens (strain KCTC 0769BP / MBEL55E) protein is Phosphoribosylformylglycinamidine cyclo-ligase.